The primary structure comprises 402 residues: mRNA cap guanine-N(7) methyltransferase (402 aa).

Residues 1 to 11 (MDHVLNPEEKV) are compositionally biased toward basic and acidic residues. Residues 1–75 (MDHVLNPEEK…PRLEEGHGSL (75 aa)) are disordered. Residues 35–50 (PKLSASEKSLPGNTKS) show a composition bias toward polar residues. Positions 55–72 (KAAEPDSPPKRPRLEEGH) are enriched in basic and acidic residues. The mRNA cap 0 methyltransferase domain maps to 94-401 (SRIFHLRNFN…IYLLFAFEKQ (308 aa)). 103 to 104 (NN) is an mRNA binding site. Residues lysine 107, glycine 131, aspartate 153, aspartate 187, glutamine 210, and tyrosine 215 each coordinate S-adenosyl-L-methionine.

This sequence belongs to the class I-like SAM-binding methyltransferase superfamily. mRNA cap 0 methyltransferase family.

It localises to the nucleus. It catalyses the reaction a 5'-end (5'-triphosphoguanosine)-ribonucleoside in mRNA + S-adenosyl-L-methionine = a 5'-end (N(7)-methyl 5'-triphosphoguanosine)-ribonucleoside in mRNA + S-adenosyl-L-homocysteine. Catalytic subunit of the mRNA-capping methyltransferase RNMT:RAMAC complex that methylates the N7 position of the added guanosine to the 5'-cap structure of mRNAs. Binds RNA containing 5'-terminal GpppC. The protein is mRNA cap guanine-N(7) methyltransferase (rnmt) of Xenopus laevis (African clawed frog).